Reading from the N-terminus, the 323-residue chain is Formyltetrahydrofolate deformylase 1, mitochondrial (323 aa).

The transit peptide at 1 to 25 (MIRRITERASGFAKNIPILKSSRFH) directs the protein to the mitochondrion. The 84-residue stretch at 41–124 (VHVFHCQDAV…SVVRVPSIDP (84 aa)) folds into the ACT domain. Asp-267 is a catalytic residue.

The protein belongs to the PurU family. In terms of tissue distribution, expressed in leaves, cotyledons, roots, seeds and flowers.

Its subcellular location is the mitochondrion. The enzyme catalyses (6R)-10-formyltetrahydrofolate + H2O = (6S)-5,6,7,8-tetrahydrofolate + formate + H(+). Functionally, deformylase involved in photorespiration. Prevents excessive accumulation of 5-formyl tetrahydrofolate (THF), a potent inhibitor of the Gly decarboxylase/Ser hydroxymethyltransferase complex. This Arabidopsis thaliana (Mouse-ear cress) protein is Formyltetrahydrofolate deformylase 1, mitochondrial (PURU1).